The following is a 214-amino-acid chain: Cytochrome c biogenesis ATP-binding export protein CcmA (214 aa).

The region spanning 12–214 is the ABC transporter domain; it reads LAARALAFSR…TRMLTLEAAA (203 aa). ATP is bound at residue 44–51; that stretch reads GDNGAGKT.

The protein belongs to the ABC transporter superfamily. CcmA exporter (TC 3.A.1.107) family. In terms of assembly, the complex is composed of two ATP-binding proteins (CcmA) and two transmembrane proteins (CcmB).

It localises to the cell inner membrane. The enzyme catalyses heme b(in) + ATP + H2O = heme b(out) + ADP + phosphate + H(+). Functionally, part of the ABC transporter complex CcmAB involved in the biogenesis of c-type cytochromes; once thought to export heme, this seems not to be the case, but its exact role is uncertain. Responsible for energy coupling to the transport system. This Xanthomonas campestris pv. campestris (strain 8004) protein is Cytochrome c biogenesis ATP-binding export protein CcmA.